Reading from the N-terminus, the 225-residue chain is Myelin-associated neurite-outgrowth inhibitor (225 aa).

Topologically, residues 1–58 (MNPVYSPGSSGVPYANAKGIGYPAGFPMGYAAAAPAYSPNMYAGPNPAFQQELEHPAH) are cytoplasmic. The helical transmembrane segment at 59–75 (VSSGVQMFMFGHAFSVA) threads the bilayer. The Extracellular portion of the chain corresponds to 76–173 (RNGAIPSGYT…PAPIQSPRGN (98 aa)). Residues 174-193 (GVAMGMVAGTTMAMSAGTLL) traverse the membrane as a helical segment. The Cytoplasmic segment spans residues 194–225 (TSHYPSPVAPQVTMPTYRPPGTPTYSYVPPQW).

Belongs to the FAM168 family.

It localises to the cytoplasm. The protein localises to the perinuclear region. It is found in the cell membrane. Its subcellular location is the cell projection. The protein resides in the axon. Its function is as follows. Inhibitor of neuronal axonal outgrowth. This is Myelin-associated neurite-outgrowth inhibitor (fam168b) from Xenopus laevis (African clawed frog).